The sequence spans 413 residues: Putative competence-damage inducible protein (413 aa).

Belongs to the CinA family.

This Desulforudis audaxviator (strain MP104C) protein is Putative competence-damage inducible protein.